Reading from the N-terminus, the 362-residue chain is Chorismate synthase (362 aa).

2 residues coordinate NADP(+): Arg-48 and Arg-54. FMN contacts are provided by residues 131 to 133 (RSS), 243 to 244 (NA), Gly-287, 302 to 306 (KPTSS), and Arg-328.

It belongs to the chorismate synthase family. In terms of assembly, homotetramer. FMNH2 serves as cofactor.

The catalysed reaction is 5-O-(1-carboxyvinyl)-3-phosphoshikimate = chorismate + phosphate. The protein operates within metabolic intermediate biosynthesis; chorismate biosynthesis; chorismate from D-erythrose 4-phosphate and phosphoenolpyruvate: step 7/7. Its function is as follows. Catalyzes the anti-1,4-elimination of the C-3 phosphate and the C-6 proR hydrogen from 5-enolpyruvylshikimate-3-phosphate (EPSP) to yield chorismate, which is the branch point compound that serves as the starting substrate for the three terminal pathways of aromatic amino acid biosynthesis. This reaction introduces a second double bond into the aromatic ring system. The polypeptide is Chorismate synthase (Bradyrhizobium diazoefficiens (strain JCM 10833 / BCRC 13528 / IAM 13628 / NBRC 14792 / USDA 110)).